A 595-amino-acid chain; its full sequence is Quinoprotein alcohol dehydrogenase PedH (595 aa).

The first 27 residues, 1–27 (MTRSPRRPLFAVSLVLSAMLLAGAAHA), serve as a signal peptide directing secretion. Residue Gln87 coordinates pyrroloquinoline quinone. A disulfide bridge links Cys131 with Cys132. Pyrroloquinoline quinone is bound by residues Arg137, Ser181, Gly197, and Gly198. Pr(3+) is bound at residue Glu199. Residue Trp263 participates in pyrroloquinoline quinone binding. Pr(3+) is bound by residues Asn281, Asp323, and Asp325. Asp323 functions as the Proton acceptor in the catalytic mechanism. Arg350, Asn417, Trp493, and Ala557 together coordinate pyrroloquinoline quinone.

The protein belongs to the bacterial PQQ dehydrogenase family. Pr(3+) serves as cofactor. It depends on Nd(3+) as a cofactor. La(3+) is required as a cofactor. The cofactor is Ce(3+). Requires Sm(3+) as cofactor. Pyrroloquinoline quinone serves as cofactor. In terms of processing, the disulfide ring formed between the two adjacent cysteine residues Cys-131 and Cys-132 is essential for efficient electron transfer at pH 7 from PedH to its natural electron acceptor cytochrome c550.

It localises to the periplasm. It carries out the reaction a primary alcohol + 2 Fe(III)-[cytochrome c] = an aldehyde + 2 Fe(II)-[cytochrome c] + 2 H(+). It catalyses the reaction ethanol + 2 Fe(III)-[cytochrome c] = acetaldehyde + 2 Fe(II)-[cytochrome c] + 2 H(+). The catalysed reaction is butan-1-ol + 2 Fe(III)-[cytochrome c] = butanal + 2 Fe(II)-[cytochrome c] + 2 H(+). The enzyme catalyses butan-2-ol + 2 Fe(III)-[cytochrome c] = butan-2-one + 2 Fe(II)-[cytochrome c] + 2 H(+). It carries out the reaction 2-phenylethanol + 2 Fe(III)-[cytochrome c] = 2-phenylacetaldehyde + 2 Fe(II)-[cytochrome c] + 2 H(+). It catalyses the reaction octan-1-ol + 2 Fe(III)-[cytochrome c] = octanal + 2 Fe(II)-[cytochrome c] + 2 H(+). The catalysed reaction is hexan-1-ol + 2 Fe(III)-[cytochrome c] = hexanal + 2 Fe(II)-[cytochrome c] + 2 H(+). The enzyme catalyses cinnamyl alcohol + 2 Fe(III)-[cytochrome c] = cinnamaldehyde + 2 Fe(II)-[cytochrome c] + 2 H(+). It carries out the reaction farnesol + 2 Fe(III)-[cytochrome c] = farnesal + 2 Fe(II)-[cytochrome c] + 2 H(+). It catalyses the reaction an aldehyde + 2 Fe(III)-[cytochrome c] + H2O = a carboxylate + 2 Fe(II)-[cytochrome c] + 3 H(+). The catalysed reaction is acetaldehyde + 2 Fe(III)-[cytochrome c] + H2O = 2 Fe(II)-[cytochrome c] + acetate + 3 H(+). The enzyme catalyses butanal + 2 Fe(III)-[cytochrome c] + H2O = butanoate + 2 Fe(II)-[cytochrome c] + 3 H(+). It carries out the reaction hexanal + 2 Fe(III)-[cytochrome c] + H2O = hexanoate + 2 Fe(II)-[cytochrome c] + 3 H(+). It catalyses the reaction octanal + 2 Fe(III)-[cytochrome c] + H2O = octanoate + 2 Fe(II)-[cytochrome c] + 3 H(+). Functionally, alcohol dehydrogenase that catalyzes the oxidation of a range of substrates, including linear and aromatic primary and secondary alcohols, as well as aldehydes, but only in the presence of lanthanides, allowing bacterial growth with a variety of volatile organic compounds (VOCs) as carbon and energy sources. Is also involved in the transcriptional regulation of pedE and pedH, most likely acting as a lanthanide sensory module. Uses a specific inducible cytochrome c550, encoded by the adjacent gene in the locus, as electron acceptor. This chain is Quinoprotein alcohol dehydrogenase PedH, found in Pseudomonas putida (strain ATCC 47054 / DSM 6125 / CFBP 8728 / NCIMB 11950 / KT2440).